Consider the following 320-residue polypeptide: Protoheme IX farnesyltransferase 1 (320 aa).

The next 9 membrane-spanning stretches (helical) occupy residues 34–54 (GIII…FASA), 58–78 (LTGL…AFVM), 112–132 (AMIL…LYSL), 135–155 (LTAF…TVWV), 160–180 (VWST…GYCA), 189–209 (AVLL…AIGI), 234–254 (IKMM…PFSL), 255–275 (GTGH…GIWI), and 299–319 (LIYF…MFLI).

Belongs to the UbiA prenyltransferase family. Protoheme IX farnesyltransferase subfamily. As to quaternary structure, interacts with CtaA.

The protein resides in the cell membrane. The catalysed reaction is heme b + (2E,6E)-farnesyl diphosphate + H2O = Fe(II)-heme o + diphosphate. It functions in the pathway porphyrin-containing compound metabolism; heme O biosynthesis; heme O from protoheme: step 1/1. Converts heme B (protoheme IX) to heme O by substitution of the vinyl group on carbon 2 of heme B porphyrin ring with a hydroxyethyl farnesyl side group. The protein is Protoheme IX farnesyltransferase 1 (ctaB1) of Bacillus subtilis (strain 168).